A 234-amino-acid polypeptide reads, in one-letter code: Covalently-linked cell wall protein 14 (234 aa).

The N-terminal stretch at 1 to 22 (MASFLKISTLIAIVSTLQTTLA) is a signal peptide. Positions 23 to 109 (APPACLLACV…SSEESSASAS (87 aa)) constitute a CFEM domain. Intrachain disulfides connect C27-C66, C31-C61, C41-C49, and C51-C82. A heme-binding site is contributed by D46. A compositionally biased stretch (low complexity) spans 86-207 (SSQSSSSESE…ASSSESTTAT (122 aa)). Residues 86–208 (SSQSSSSESE…SSSESTTATG (123 aa)) form a disordered region. G215 is lipidated: GPI-anchor amidated glycine. Residues 216-234 (SAAKVGLGALVGLVGAVLL) constitute a propeptide, removed in mature form.

It belongs to the CCW14 family. Post-translationally, the GPI-anchor is attached to the protein in the endoplasmic reticulum and serves to target the protein to the cell surface. There, the glucosamine-inositol phospholipid moiety is cleaved off and the GPI-modified mannoprotein is covalently attached via its lipidless GPI glycan remnant to the 1,6-beta-glucan of the outer cell wall layer.

It is found in the secreted. It localises to the cell wall. The protein resides in the membrane. Beta-glucan associated cell wall protein involved in cell wall structure. May serve as cross-linking or coat-forming wall protein. The sequence is that of Covalently-linked cell wall protein 14 (SSR1) from Candida albicans (strain SC5314 / ATCC MYA-2876) (Yeast).